Consider the following 265-residue polypeptide: Transcriptional activator TAF-1 (265 aa).

Disordered stretches follow at residues alanine 1–alanine 133 and threonine 167–glutamate 218. The segment covering alanine 35–serine 46 has biased composition (low complexity). Composition is skewed to basic and acidic residues over residues arginine 103–serine 115 and asparagine 191–arginine 209. The bZIP domain occupies glutamate 194–leucine 257. The basic motif stretch occupies residues lysine 196–lysine 215. The segment at leucine 222–leucine 257 is leucine-zipper.

It belongs to the bZIP family. In terms of tissue distribution, present mainly in roots. Barely detectable in stems and leaves.

Its subcellular location is the nucleus. Trans-activator of a beta-glucuronidase (GUS) reporter gene. Binds to a G-box-related element, (5'-GCAACGTGGC-3'). Also binds to the HEX-motif of wheat histone H3 promoter. This is Transcriptional activator TAF-1 (TAF1) from Nicotiana tabacum (Common tobacco).